Reading from the N-terminus, the 544-residue chain is High affinity immunoglobulin alpha and immunoglobulin mu Fc receptor (544 aa).

A signal peptide spans 1-16; sequence MPLFLILCLLQGSSFA. Topologically, residues 17–462 are extracellular; it reads LPQKRPHPRW…TFPEDESSSR (446 aa). Residues 61 to 169 enclose the Ig-like V-type domain; sequence PNALKGSRLV…NMLFLSMNLT (109 aa). Residues 75–97 are mediates immunoglobulin Fc fragment-binding; it reads GGAVTIQCHYAPSSVNRHQRKYW. Cys82 and Cys153 form a disulfide bridge. Residue Asn167 is glycosylated (N-linked (GlcNAc...) asparagine). Residues 218 to 325 are disordered; that stretch reads DTVASTPGTS…TTKADRPRED (108 aa). 2 stretches are compositionally biased toward polar residues: residues 220–232 and 280–291; these read VASTPGTSMTTAS and ASKSRSMSNTTE. Over residues 307–325 the composition is skewed to basic and acidic residues; that stretch reads ASKDRREITTTKADRPRED. A helical transmembrane segment spans residues 463-483; it reads TLAPVSTMLALFMLMALVLLQ. Residues 484–544 lie on the Cytoplasmic side of the membrane; that stretch reads RKLRRRRTSQ…LTAPERNPGP (61 aa). The tract at residues 511–544 is disordered; the sequence is PQPDQLPHVERKMLQDDSLPAGASLTAPERNPGP.

Interacts with IGHM; this interaction facilitates the endocytosis of IgM-coated microbes or IgM-antigen immune complexes. Post-translationally, N-glycosylated.

The protein localises to the cell membrane. Functions as a receptor for the Fc fragment of IgA and IgM. Binds IgA and IgM with high affinity and mediates their endocytosis. May function in the immune response to microbes mediated by IgA and IgM. This Pongo abelii (Sumatran orangutan) protein is High affinity immunoglobulin alpha and immunoglobulin mu Fc receptor (FCAMR).